The primary structure comprises 170 residues: Adenine phosphoribosyltransferase (170 aa).

It belongs to the purine/pyrimidine phosphoribosyltransferase family. Homodimer.

It localises to the cytoplasm. The catalysed reaction is AMP + diphosphate = 5-phospho-alpha-D-ribose 1-diphosphate + adenine. Its pathway is purine metabolism; AMP biosynthesis via salvage pathway; AMP from adenine: step 1/1. In terms of biological role, catalyzes a salvage reaction resulting in the formation of AMP, that is energically less costly than de novo synthesis. In Bacillus velezensis (strain DSM 23117 / BGSC 10A6 / LMG 26770 / FZB42) (Bacillus amyloliquefaciens subsp. plantarum), this protein is Adenine phosphoribosyltransferase.